A 738-amino-acid polypeptide reads, in one-letter code: Leucine-rich repeat flightless-interacting protein 1 (738 aa).

Thr2 bears the N-acetylthreonine mark. Ser16 is subject to Phosphoserine. The span at 40-65 shows a compositional bias: basic and acidic residues; the sequence is IRMKELERQQKEVEERPDKDFAEKGS. Positions 40-98 are disordered; the sequence is IRMKELERQQKEVEERPDKDFAEKGSRNMPSLSAATLASLGGTSSRRGSGDTSISMDTE. Residues 78 to 94 show a composition bias toward low complexity; it reads SLGGTSSRRGSGDTSIS. A phosphoserine mark is found at Ser83, Ser84, Ser88, and Ser92. Positions 94–194 form a coiled coil; that stretch reads SMDTEASIRE…LRQREEMLEK (101 aa). Lys249 participates in a covalent cross-link: Glycyl lysine isopeptide (Lys-Gly) (interchain with G-Cter in SUMO1). 2 stretches are compositionally biased toward basic and acidic residues: residues 253 to 262 and 277 to 297; these read VEKVGQRETL and DCVDRGVLHPGEKAENQRPVE. Residues 253–738 form a disordered region; the sequence is VEKVGQRETL…SKSKEDCTMS (486 aa). At Ser302 the chain carries Phosphoserine. Polar residues predominate over residues 314-326; the sequence is EVQSQDQENTSIL. Basic and acidic residues predominate over residues 330–347; that stretch reads EQIESHEVTNKSDSRDSN. 2 positions are modified to phosphoserine: Ser346 and Ser348. Over residues 371-380 the composition is skewed to polar residues; that stretch reads KNQSENSMDS. Composition is skewed to basic and acidic residues over residues 381-400 and 467-476; these read QGKENQEDLGKGSFEPRPDH and SERELAHEAA. The DNA-binding stretch occupies residues 479–580; it reads EEALTQSSQA…KNKKKKAAAP (102 aa). Composition is skewed to polar residues over residues 483–495 and 520–534; these read TQSSQAGGENTVT and TVQSGHQDTTGPGST. Over residues 535-553 the composition is skewed to basic and acidic residues; the sequence is DTKHTSPHAKERNKAKSEQ. Ser551 and Ser560 each carry phosphoserine. Residues 563 to 577 are compositionally biased toward basic residues; sequence KKTKNKKKKNKKKKA. Positions 606 to 626 are enriched in basic and acidic residues; the sequence is RVQATDKKWAAETPELKEDPQ. Phosphoserine is present on residues Ser675 and Ser701. 2 stretches are compositionally biased toward basic and acidic residues: residues 691 to 703 and 720 to 738; these read QADEKGIEGHSVD and EQAREEVGNSKSKEDCTMS.

This sequence belongs to the LRRFIP family. As to quaternary structure, homodimer. May also form higher oligomers. Interacts with FLII. Interacts with MYD88. Competes with FLII for MyD88-binding, even in the absence of LPS.

Its subcellular location is the nucleus. It localises to the cytoplasm. In terms of biological role, transcriptional repressor which preferentially binds to the GC-rich consensus sequence (5'-AGCCCCCGGCG-3') and may regulate expression of TNF, EGFR and PDGFA. May control smooth muscle cells proliferation following artery injury through PDGFA repression. May also bind double-stranded RNA. Positively regulates Toll-like receptor (TLR) signaling in response to agonist probably by competing with the negative FLII regulator for MYD88-binding. This chain is Leucine-rich repeat flightless-interacting protein 1 (Lrrfip1), found in Rattus norvegicus (Rat).